We begin with the raw amino-acid sequence, 40 residues long: Antifungal protein ginkbilobin-1 (40 aa).

One can recognise a Gnk2-homologous domain in the interval 3-40 (TAFVSSAHNTQKIPAGAPFNRNLRAMLADLRQNAAFAG). N11 is an alpha-D-mannopyranose binding site.

Expressed in seeds (at the protein level).

Its function is as follows. Possesses antifungal activity against B.cinerea, M.arachidicola, F.oxysporum, R.solani and C.comatus and moderate antibacterial activity against S.aureus, P.aeruginosa and E.coli. Inhibits HIV-1 reverse transcriptase and proliferation of murine splenocytes. Exerts antifungal activity through its carbohydrate-binding specificity. The chain is Antifungal protein ginkbilobin-1 from Ginkgo biloba (Ginkgo).